Reading from the N-terminus, the 142-residue chain is Nucleoside diphosphate kinase (142 aa).

Residues lysine 11, phenylalanine 59, arginine 87, threonine 93, arginine 104, and asparagine 114 each contribute to the ATP site. Catalysis depends on histidine 117, which acts as the Pros-phosphohistidine intermediate.

This sequence belongs to the NDK family. As to quaternary structure, homotetramer. It depends on Mg(2+) as a cofactor.

The protein localises to the cytoplasm. The catalysed reaction is a 2'-deoxyribonucleoside 5'-diphosphate + ATP = a 2'-deoxyribonucleoside 5'-triphosphate + ADP. It catalyses the reaction a ribonucleoside 5'-diphosphate + ATP = a ribonucleoside 5'-triphosphate + ADP. In terms of biological role, major role in the synthesis of nucleoside triphosphates other than ATP. The ATP gamma phosphate is transferred to the NDP beta phosphate via a ping-pong mechanism, using a phosphorylated active-site intermediate. This chain is Nucleoside diphosphate kinase, found in Yersinia pseudotuberculosis serotype I (strain IP32953).